A 239-amino-acid chain; its full sequence is tRNA (guanine-N(1)-)-methyltransferase (239 aa).

Residues Gly110 and 130-135 (IGDYVL) each bind S-adenosyl-L-methionine.

This sequence belongs to the RNA methyltransferase TrmD family. As to quaternary structure, homodimer.

It localises to the cytoplasm. The enzyme catalyses guanosine(37) in tRNA + S-adenosyl-L-methionine = N(1)-methylguanosine(37) in tRNA + S-adenosyl-L-homocysteine + H(+). In terms of biological role, specifically methylates guanosine-37 in various tRNAs. The sequence is that of tRNA (guanine-N(1)-)-methyltransferase from Borrelia garinii subsp. bavariensis (strain ATCC BAA-2496 / DSM 23469 / PBi) (Borreliella bavariensis).